The primary structure comprises 323 residues: Probable oxidoreductase patJ (323 aa).

The tract at residues aspartate 291–glutamate 323 is disordered. Residues glutamate 305–arginine 316 are compositionally biased toward basic and acidic residues.

This sequence belongs to the oxidoreductase OpS7 family.

The protein resides in the vacuole lumen. The protein localises to the cytoplasmic vesicle lumen. It participates in mycotoxin biosynthesis; patulin biosynthesis. Its function is as follows. Probable oxidoreductase; part of the gene cluster that mediates the biosynthesis of patulin, an acetate-derived tetraketide mycotoxin produced by several fungal species that shows antimicrobial properties against several bacteria. PatJ acts with patO in the vacuole to convert gentisyl alcohol to isoepoxydon. The pathway begins with the synthesis of 6-methylsalicylic acid by the polyketide synthase (PKS) patK via condensation of acetate and malonate units. The 6-methylsalicylic acid decarboxylase patG then catalyzes the decarboxylation of 6-methylsalicylic acid to yield m-cresol (also known as 3-methylphenol). These first reactions occur in the cytosol. The intermediate m-cresol is then transported into the endoplasmic reticulum where the cytochrome P450 monooxygenase patH converts it to m-hydroxybenzyl alcohol, which is further converted to gentisyl alcohol by the cytochrome P450 monooxygenase patI. The oxidoreductases patJ and patO further convert gentisyl alcohol to isoepoxydon in the vacuole. PatN catalyzes then the transformation of isoepoxydon into phyllostine. The cluster protein patF is responsible for the conversion from phyllostine to neopatulin whereas the alcohol dehydrogenase patD converts neopatulin to E-ascladiol. The steps between isoepoxydon and E-ascladiol occur in the cytosol, and E-ascladiol is probably secreted to the extracellular space by one of the cluster-specific transporters patC or patM. Finally, the secreted patulin synthase patE catalyzes the conversion of E-ascladiol to patulin. The sequence is that of Probable oxidoreductase patJ from Aspergillus clavatus (strain ATCC 1007 / CBS 513.65 / DSM 816 / NCTC 3887 / NRRL 1 / QM 1276 / 107).